A 323-amino-acid polypeptide reads, in one-letter code: Apolipoprotein E (323 aa).

Residues 1–18 (MKVLWAALVVTLLAGCWA) form the signal peptide. Repeat copies occupy residues 86–107 (ALMDETMKEVKAYKAELDEQLG), 108–129 (PMTSETQARVAKELQAAQARLR), 130–151 (SDMEDVRNRLTQYRGELQAMLG), 152–173 (QSSEELRARFASHMRKLRKRVL), 174–195 (RDAEDLQRRLAVYKAGVREGAE), 196–217 (RSVSSIRERLWPLLEQARERNA), 218–239 (KVGALATQPLLERADALGQQLR), and 240–261 (GQLEEMSSRARGHLEEMREQIQ). The interval 86-261 (ALMDETMKEV…HLEEMREQIQ (176 aa)) is 8 X 22 AA approximate tandem repeats. Met149 carries the methionine sulfoxide modification. Ser153 is modified (phosphoserine). Positions 164–174 (HMRKLRKRVLR) are LDL and other lipoprotein receptors binding. 168 to 171 (LRKR) is a binding site for heparin. Residues 216 to 296 (NAKVGALATQ…SWFEPLLEDM (81 aa)) are lipid-binding and lipoprotein association. Residue 235–242 (GQQLRGQL) participates in heparin binding. A homooligomerization region spans residues 272–323 (DQIRQKAEAFQARLKSWFEPLLEDMQRQWDGLVEKVQAAVATIPTSKPVEEP). The interval 284–296 (RLKSWFEPLLEDM) is specificity for association with VLDL.

Belongs to the apolipoprotein A1/A4/E family. As to quaternary structure, homotetramer. May interact with ABCA1; functionally associated with ABCA1 in the biogenesis of HDLs. May interact with APP/A4 amyloid-beta peptide; the interaction is extremely stable in vitro but its physiological significance is unclear. May interact with MAPT. May interact with MAP2. In the cerebrospinal fluid, interacts with secreted SORL1. Interacts with PMEL; this allows the loading of PMEL luminal fragment on ILVs to induce fibril nucleation. In terms of processing, APOE exists as multiple glycosylated and sialylated glycoforms within cells and in plasma. The extent of glycosylation and sialylation are tissue and context specific. Glycated in plasma VLDL. Post-translationally, phosphorylated by FAM20C in the extracellular medium.

It is found in the secreted. It localises to the extracellular space. Its subcellular location is the extracellular matrix. The protein localises to the extracellular vesicle. The protein resides in the endosome. It is found in the multivesicular body. Its function is as follows. APOE is an apolipoprotein, a protein associating with lipid particles, that mainly functions in lipoprotein-mediated lipid transport between organs via the plasma and interstitial fluids. APOE is a core component of plasma lipoproteins and is involved in their production, conversion and clearance. Apolipoproteins are amphipathic molecules that interact both with lipids of the lipoprotein particle core and the aqueous environment of the plasma. As such, APOE associates with chylomicrons, chylomicron remnants, very low density lipoproteins (VLDL) and intermediate density lipoproteins (IDL) but shows a preferential binding to high-density lipoproteins (HDL). It also binds a wide range of cellular receptors including the LDL receptor/LDLR and the very low-density lipoprotein receptor/VLDLR that mediate the cellular uptake of the APOE-containing lipoprotein particles. Finally, APOE also has a heparin-binding activity and binds heparan-sulfate proteoglycans on the surface of cells, a property that supports the capture and the receptor-mediated uptake of APOE-containing lipoproteins by cells. The polypeptide is Apolipoprotein E (APOE) (Canis lupus familiaris (Dog)).